Here is a 1093-residue protein sequence, read N- to C-terminus: GPI ethanolamine phosphate transferase 3, catalytic subunit (1093 aa).

A helical transmembrane segment spans residues 4-24; that stretch reads VSVLLFLAWVCFLFYAGIALF. Residue Asn268 is glycosylated (N-linked (GlcNAc...) asparagine). Transmembrane regions (helical) follow at residues 460-480, 483-503, 512-532, 669-689, 702-722, 748-768, 831-851, 856-876, and 945-965; these read AAACLLCLLASQLAVAPGFLF, LLLIPVAWGLTWTILYAGVSV, VVLGAVAAAGSLLPFLWKAWV, LWYGACVGALVALLVVVRLWL, VLFVRWGMPLMVLGTAAYWAL, VMGLAALGLVLLLWRPVTVLV, SVYSAAMVTALLLLAFPLMLL, VSLVFLLLFLQSFLLLHLLAA, and FASHLLFAVGCPLLLLWPFLC. Residues 971-991 are disordered; it reads KRRQPLPGSESEARVRPEEEE. 2 helical membrane passes run 1018–1038 and 1052–1072; these read LKYLFILGAQILACALAASIL and FIFEAVGFIVSSVGLLLGIAL.

This sequence belongs to the PIGG/PIGN/PIGO family. PIGO subfamily. As to quaternary structure, forms the ethanolamine phosphate transferase 3 complex composed by PIGO and PIGF. PIGF is required to stabilize PIGO.

It localises to the endoplasmic reticulum membrane. The protein operates within glycolipid biosynthesis; glycosylphosphatidylinositol-anchor biosynthesis. In terms of biological role, catalytic subunit of the ethanolamine phosphate transferase 3 complex that transfers an ethanolamine phosphate (EtNP) from a phosphatidylethanolamine (PE) to the 6-OH position of the third alpha-1,2-linked mannose of the an alpha-D-Man-(1-&gt;2)-alpha-D-Man-(1-&gt;6)-2-PEtn-alpha-D-Man-(1-&gt;4)-alpha-D-GlcN-(1-&gt;6)-(1-radyl,2-acyl-sn-glycero-3-phospho)-2-acyl-inositol (also termed H6) intermediate to generate a 6-PEtn-alpha-D-Man-(1-&gt;2)-alpha-D-Man-(1-&gt;6)-2-PEtn-alpha-D-Man-(1-&gt;4)-alpha-D-GlcN-(1-&gt;6)-(1-radyl,2-acyl-sn-glycero-3-phospho)-2-acyl-inositol (also termed H7) and participates in the tenth step of the glycosylphosphatidylinositol-anchor biosynthesis. The protein is GPI ethanolamine phosphate transferase 3, catalytic subunit of Mus musculus (Mouse).